A 466-amino-acid polypeptide reads, in one-letter code: Argininosuccinate lyase (466 aa).

It belongs to the lyase 1 family. Argininosuccinate lyase subfamily.

The protein localises to the cytoplasm. It carries out the reaction 2-(N(omega)-L-arginino)succinate = fumarate + L-arginine. It participates in amino-acid biosynthesis; L-arginine biosynthesis; L-arginine from L-ornithine and carbamoyl phosphate: step 3/3. The protein is Argininosuccinate lyase of Campylobacter concisus (strain 13826).